Reading from the N-terminus, the 1893-residue chain is Transcription initiation factor TFIID subunit 1 (1893 aa).

A Protein kinase 1 domain is found at 1-435 (MGPGCDLLLR…VTQLHWEDDI (435 aa)). Position 137 is a phosphoserine; by autocatalysis (S137). 2 disordered regions span residues 155–184 (LMPP…NGEG) and 197–224 (ASEK…AESE). The span at 156 to 165 (MPPPPPPPGP) shows a compositional bias: pro residues. The segment covering 197–208 (ASEKVDFSSSSD) has biased composition (low complexity). At S328 the chain carries Phosphoserine; by autocatalysis. The disordered stretch occupies residues 534-557 (IPDEKEEATSNSPSKESKKESSLK). The interval 538 to 997 (KEEATSNSPS…KIPNKPTQQK (460 aa)) is histone acetyltransferase (HAT). An N6-acetyllysine modification is found at K565. Residues K570 and K583 each participate in a glycyl lysine isopeptide (Lys-Gly) (interchain with G-Cter in SUMO2) cross-link. 4 disordered regions span residues 990–1009 (PNKP…KKTV), 1128–1148 (MLQN…QERK), 1158–1177 (GSAA…VTSL), and 1254–1278 (RLKR…MKER). Composition is skewed to basic and acidic residues over residues 995 to 1004 (QQKDDKEPQP) and 1139 to 1148 (SREREEQERK). Residues 1216 to 1294 (VRIRTTKDEE…CGACGAIGHM (79 aa)) constitute a DNA-binding region (HMG box; involved in promoter binding). Residues 1254 to 1270 (RLKRNQEKEKLKGPPEK) show a composition bias toward basic and acidic residues. The interval 1363-1650 (VLKFPKQQLP…TAKEAALEEA (288 aa)) is interaction with ASF1A and ASF1B. The short motif at 1372-1379 (PPKKKRRV) is the Nuclear localization signal element. 2 consecutive Bromo domains span residues 1397 to 1505 (RRRT…LKEK) and 1519 to 1628 (LLDD…LTEY). In terms of domain architecture, Protein kinase 2 spans 1446-1893 (MDLQTLRENV…AGDSDLDSDE (448 aa)). The interval 1651-1676 (ELESLDPMTPGPYTPQPPDLYDTNTS) is disordered. Over residues 1659-1668 (TPGPYTPQPP) the composition is skewed to pro residues. 5 positions are modified to phosphoserine: S1690, S1693, A1718, E1721, and G1723. The segment at 1696 to 1893 (DIPSATPEKQ…AGDSDLDSDE (198 aa)) is disordered. Composition is skewed to acidic residues over residues 1709-1723 (EGED…EEEG) and 1741-1756 (EGED…EEGD). 3 positions are modified to phosphoserine: S1799, S1802, and S1820. The span at 1830–1840 (KSNTQDTSFSS) shows a compositional bias: polar residues. Positions 1846 to 1857 (VSEEEEDEEEEE) are enriched in acidic residues. S1847 carries the post-translational modification Phosphoserine. Polar residues predominate over residues 1860 to 1869 (SGPSVLSQVH).

The protein belongs to the TAF1 family. Component of the TFIID basal transcription factor complex, composed of TATA-box-binding protein TBP, and a number of TBP-associated factors (TAFs), including TAF1, TAF2, TAF3, TAF4, TAF5, TAF6, TAF7, TAF8, TAF9, TAF10, TAF11, TAF12 and TAF13. Interacts with TAF7; the interaction is direct. TAF1, when part of the TFIID complex, interacts with C-terminus of TP53. Part of a TFIID-containing RNA polymerase II pre-initiation complex that is composed of TBP and at least GTF2A1, GTF2A2, GTF2E1, GTF2E2, GTF2F1, GTF2H2, GTF2H3, GTF2H4, GTF2H5, GTF2B, TCEA1, ERCC2, ERCC3, TAF1, TAF2, TAF3, TAF4, TAF5, TAF6, TAF7, TAF8, TAF9, TAF10, TAF11, TAF12 and TAF13. Component of some MLL1/MLL complex, at least composed of the core components KMT2A/MLL1, ASH2L, HCFC1/HCF1, WDR5 and RBBP5, as well as the facultative components BACC1, CHD8, E2F6, HSP70, INO80C, KANSL1, LAS1L, MAX, MCRS1, MGA, KAT8/MOF, PELP1, PHF20, PRP31, RING2, RUVB1/TIP49A, RUVB2/TIP49B, SENP3, TAF1, TAF4, TAF6, TAF7, TAF9 and TEX10. RB1 interacts with the N-terminal domain of TAF1. Interacts with ASF1A and ASF1B. Interacts (via bromo domains) with acetylated lysine residues on the N-terminus of histone H1.4, H2A, H2B, H3 and H4 (in vitro). In terms of assembly, (Microbial infection) Interacts with SV40 Large T antigen. As to quaternary structure, (Microbial infection) Interacts with herpes simplex virus 1 ICP4. Requires Mg(2+) as cofactor. Post-translationally, phosphorylated by casein kinase II in vitro.

It is found in the nucleus. It carries out the reaction L-seryl-[protein] + ATP = O-phospho-L-seryl-[protein] + ADP + H(+). It catalyses the reaction L-threonyl-[protein] + ATP = O-phospho-L-threonyl-[protein] + ADP + H(+). The catalysed reaction is L-lysyl-[protein] + acetyl-CoA = N(6)-acetyl-L-lysyl-[protein] + CoA + H(+). Autophosphorylates on Ser residues. Inhibited by retinoblastoma tumor suppressor protein, RB1. Binding to TAF7 or CIITA inhibits the histone acetyltransferase activity. Functionally, the TFIID basal transcription factor complex plays a major role in the initiation of RNA polymerase II (Pol II)-dependent transcription. TFIID recognizes and binds promoters with or without a TATA box via its subunit TBP, a TATA-box-binding protein, and promotes assembly of the pre-initiation complex (PIC). The TFIID complex consists of TBP and TBP-associated factors (TAFs), including TAF1, TAF2, TAF3, TAF4, TAF5, TAF6, TAF7, TAF8, TAF9, TAF10, TAF11, TAF12 and TAF13. TAF1 is the largest component and core scaffold of the TFIID complex, involved in nucleating complex assembly. TAF1 forms a promoter DNA binding subcomplex of TFIID, together with TAF7 and TAF2. Contains novel N- and C-terminal Ser/Thr kinase domains which can autophosphorylate or transphosphorylate other transcription factors. Phosphorylates TP53 on 'Thr-55' which leads to MDM2-mediated degradation of TP53. Phosphorylates GTF2A1 and GTF2F1 on Ser residues. Possesses DNA-binding activity. Essential for progression of the G1 phase of the cell cycle. Exhibits histone acetyltransferase activity towards histones H3 and H4. The chain is Transcription initiation factor TFIID subunit 1 from Homo sapiens (Human).